Here is a 1190-residue protein sequence, read N- to C-terminus: Wings apart-like protein homolog (1190 aa).

2 disordered regions span residues 1 to 23 (MTSR…FDEV) and 46 to 82 (QKRP…DESL). A mediates interaction with the cohesin complex region spans residues 1-659 (MTSRFGKTYS…ENQEFTDDIE (659 aa)). Basic and acidic residues predominate over residues 54–66 (DIQEIPKKPKVEE). Positions 73–75 (FGF) match the FGF motif 1 motif. Residue serine 77 is modified to Phosphoserine. An N6-acetyllysine modification is found at lysine 168. Phosphoserine is present on residues serine 221, serine 223, and serine 226. Residues 260 to 286 (LLEMKDDDFKNRLENLNEAIEEDIVQS) are a coiled coil. 2 positions are modified to phosphoserine: serine 347 and serine 380. Residues 429–431 (FGF) carry the FGF motif 2 motif. Phosphoserine is present on serine 443. The FGF motif 3 signature appears at 453 to 455 (FGF). Serine 459 and serine 461 each carry phosphoserine. A compositionally biased stretch (acidic residues) spans 459–469 (SESEDDEDDDC). Positions 459-553 (SESEDDEDDD…SGPKRSPTKA (95 aa)) are disordered. A compositionally biased stretch (polar residues) spans 494 to 509 (SNDNSQDSQSGTNNAE). Residues 531-540 (QGDKSKENTR) show a composition bias toward basic and acidic residues. The region spanning 626–1169 (RREDKELYTV…KKFLSFMNLT (544 aa)) is the WAPL domain. Residues 749-782 (ELEQDASSAKLLNEKDMNKIKEKIRRLCETVHNK) adopt a coiled-coil conformation. Serine 904 is modified (phosphoserine).

This sequence belongs to the WAPL family. Interacts with the cohesin complex throughout the cell cycle; interacts with both chromatin-bound and soluble pools of the complex. Interacts with RAD21; the interaction is direct. Interacts with PDS5A; the interaction is direct, cohesin-dependent and competitive with CDCA5/SORORIN. Interacts (via FGF motifs) with PDS5B; the interaction is direct. Interacts with a SMC1 protein (SMC1A or SMC1B) and SMC3. In terms of assembly, (Microbial infection) Isoform 2 interacts with Epstein-Barr virus EBNA2. Deubiquitinated by USP37; leading to stabilization. Isoform 1 is highly expressed in uterine cervix tumor. Isoform 2 is widely expressed with a high level in skeletal muscle and heart.

Its subcellular location is the nucleus. The protein resides in the chromosome. It localises to the cytoplasm. Its function is as follows. Regulator of sister chromatid cohesion in mitosis which negatively regulates cohesin association with chromatin. Involved in both sister chromatid cohesion during interphase and sister-chromatid resolution during early stages of mitosis. Couples DNA replication to sister chromatid cohesion. Cohesion ensures that chromosome partitioning is accurate in both meiotic and mitotic cells and plays an important role in DNA repair. The sequence is that of Wings apart-like protein homolog from Homo sapiens (Human).